A 944-amino-acid chain; its full sequence is Putative ATP-dependent RNA helicase (944 aa).

Positions T66 to L235 constitute a Helicase ATP-binding domain. ATP is bound at residue H79–T86. Residues D183–H186 carry the DEAH box motif. One can recognise a Helicase C-terminal domain in the interval C451–Q523.

This sequence belongs to the DEAD box helicase family. DEAH subfamily.

It catalyses the reaction ATP + H2O = ADP + phosphate + H(+). This chain is Putative ATP-dependent RNA helicase, found in Heliothis virescens ascovirus 3e (HvAV-3e).